We begin with the raw amino-acid sequence, 502 residues long: Glycerol kinase (502 aa).

Thr13 is an ADP binding site. Residues Thr13, Thr14, and Ser15 each contribute to the ATP site. Position 13 (Thr13) interacts with sn-glycerol 3-phosphate. Arg17 is a binding site for ADP. Sn-glycerol 3-phosphate is bound by residues Arg83, Glu84, Tyr136, and Asp246. Glycerol-binding residues include Arg83, Glu84, Tyr136, Asp246, and Gln247. Positions 268 and 311 each coordinate ADP. Thr268, Gly311, Gln315, and Gly412 together coordinate ATP. ADP contacts are provided by Gly412 and Asn416.

This sequence belongs to the FGGY kinase family.

It catalyses the reaction glycerol + ATP = sn-glycerol 3-phosphate + ADP + H(+). Its pathway is polyol metabolism; glycerol degradation via glycerol kinase pathway; sn-glycerol 3-phosphate from glycerol: step 1/1. Its activity is regulated as follows. Inhibited by fructose 1,6-bisphosphate (FBP). In terms of biological role, key enzyme in the regulation of glycerol uptake and metabolism. Catalyzes the phosphorylation of glycerol to yield sn-glycerol 3-phosphate. This chain is Glycerol kinase, found in Francisella tularensis subsp. holarctica (strain FTNF002-00 / FTA).